Reading from the N-terminus, the 337-residue chain is Autophagy protein 5 (337 aa).

Lys-128 participates in a covalent cross-link: Glycyl lysine isopeptide (Lys-Gly) (interchain with G-Cter in ATG12). Residues 271-290 (RAQTSGEERSIDDTEEADGS) form a disordered region. Residues 276–290 (GEERSIDDTEEADGS) are compositionally biased toward basic and acidic residues.

It belongs to the ATG5 family. Conjugated to ATG12. In terms of processing, conjugated to ATG12; which is essential for autophagy. Conjugation with ATG12 involves ATG7 as an E1-like activating enzyme and ATG10 as an E2-like conjugating enzyme. In terms of tissue distribution, ubiquitous.

The protein localises to the cytoplasm. Functionally, required for autophagy. Conjugation to ATG12 is essential for plant nutrient recycling. Involved in a negative feedback loop that modulates NPR1-dependent salicylic acid (SA) signaling and limits senescence and immunity-related programmed cell death (PCD) in plants. Involved in complete proteolysis of chloroplast stroma proteins in senescent leaves. Involved in the degradation of damaged peroxisomes. The chain is Autophagy protein 5 from Arabidopsis thaliana (Mouse-ear cress).